The chain runs to 44 residues: Large ribosomal subunit protein bL34 (44 aa).

Composition is skewed to basic residues over residues 1–22 and 31–44; these read MKRT…RARM and IRAR…RLSV. The interval 1-44 is disordered; sequence MKRTLGGTSRKRKRTSGFRARMRTPDGRNVIRARRKKGRHRLSV.

The protein belongs to the bacterial ribosomal protein bL34 family.

This Nostoc punctiforme (strain ATCC 29133 / PCC 73102) protein is Large ribosomal subunit protein bL34.